A 273-amino-acid chain; its full sequence is Small ribosomal subunit protein uS3 (273 aa).

Positions 40–110 (IRNLFFVNYR…NLDLTINEIG (71 aa)) constitute a KH type-2 domain. Polar residues predominate over residues 244–265 (QVLSANKLTGSDVETSSIQALT). Residues 244-273 (QVLSANKLTGSDVETSSIQALTKPNKEDKQ) form a disordered region.

Belongs to the universal ribosomal protein uS3 family. In terms of assembly, part of the 30S ribosomal subunit. Forms a tight complex with proteins S10 and S14.

Functionally, binds the lower part of the 30S subunit head. Binds mRNA in the 70S ribosome, positioning it for translation. The polypeptide is Small ribosomal subunit protein uS3 (Mycoplasma pneumoniae (strain ATCC 29342 / M129 / Subtype 1) (Mycoplasmoides pneumoniae)).